We begin with the raw amino-acid sequence, 67 residues long: Large ribosomal subunit protein bL35 (67 aa).

It belongs to the bacterial ribosomal protein bL35 family.

The polypeptide is Large ribosomal subunit protein bL35 (Rhizobium johnstonii (strain DSM 114642 / LMG 32736 / 3841) (Rhizobium leguminosarum bv. viciae)).